A 321-amino-acid polypeptide reads, in one-letter code: tRNA(Ile)-lysidine synthase (321 aa).

Position 21 to 26 (21 to 26 (SYGSDS)) interacts with ATP.

It belongs to the tRNA(Ile)-lysidine synthase family.

It is found in the cytoplasm. It carries out the reaction cytidine(34) in tRNA(Ile2) + L-lysine + ATP = lysidine(34) in tRNA(Ile2) + AMP + diphosphate + H(+). In terms of biological role, ligates lysine onto the cytidine present at position 34 of the AUA codon-specific tRNA(Ile) that contains the anticodon CAU, in an ATP-dependent manner. Cytidine is converted to lysidine, thus changing the amino acid specificity of the tRNA from methionine to isoleucine. The sequence is that of tRNA(Ile)-lysidine synthase from Campylobacter jejuni (strain RM1221).